Reading from the N-terminus, the 816-residue chain is Leucine--tRNA ligase (816 aa).

The short motif at 46-56 (PYPSGALHMGH) is the 'HIGH' region element. Residues 638-642 (KMSKS) carry the 'KMSKS' region motif. Lysine 641 is an ATP binding site.

The protein belongs to the class-I aminoacyl-tRNA synthetase family.

The protein resides in the cytoplasm. The catalysed reaction is tRNA(Leu) + L-leucine + ATP = L-leucyl-tRNA(Leu) + AMP + diphosphate. In Xanthomonas campestris pv. campestris (strain ATCC 33913 / DSM 3586 / NCPPB 528 / LMG 568 / P 25), this protein is Leucine--tRNA ligase.